The chain runs to 450 residues: Tubulin beta-3 chain (450 aa).

The short motif at 1–4 (MREI) is the MREI motif element. GDP-binding residues include Gly10, Gln11, Cys12, and Gln15. Residue Gln11 participates in GTP binding. Residue Glu69 coordinates GTP. A Mg(2+)-binding site is contributed by Glu69. Positions 99, 138, 142, 143, and 144 each coordinate GDP. Residues Ser138, Gly142, Thr143, and Gly144 each contribute to the GTP site. Ser172 bears the Phosphoserine; by CDK1 mark. Positions 177, 204, 222, and 226 each coordinate GDP. Asn204 provides a ligand contact to GTP. Asn226 contributes to the GTP binding site. The disordered stretch occupies residues 425-450 (YQDATAEEEGEMYEDDEEESEAQGPK). The span at 429–450 (TAEEEGEMYEDDEEESEAQGPK) shows a compositional bias: acidic residues. At Glu438 the chain carries 5-glutamyl polyglutamate. Phosphoserine is present on Ser444.

Belongs to the tubulin family. In terms of assembly, heterodimer of alpha- and beta-tubulin. A typical microtubule is a hollow water-filled tube with an outer diameter of 25 nm and an inner diameter of 15 nM. Alpha-beta heterodimers associate head-to-tail to form protofilaments running lengthwise along the microtubule wall with the beta-tubulin subunit facing the microtubule plus end conferring a structural polarity. Microtubules usually have 13 protofilaments but different protofilament numbers can be found in some organisms and specialized cells. Interacts with gamma-tubulin; the interaction allows microtubules to nucleate from the gamma-tubulin ring complex (gTuRC). Interacts with UNC5C (via cytoplasmic domain); this interaction is decreased by NTN1/Netrin-1. Interacts with NLRP5/MATER at cytoskeleton microtubules. Interacts with DPYSL5. Interacts with CFAP61. Mg(2+) is required as a cofactor. Some glutamate residues at the C-terminus are polyglutamylated, resulting in polyglutamate chains on the gamma-carboxyl group. Polyglutamylation plays a key role in microtubule severing by spastin (SPAST). SPAST preferentially recognizes and acts on microtubules decorated with short polyglutamate tails: severing activity by SPAST increases as the number of glutamates per tubulin rises from one to eight, but decreases beyond this glutamylation threshold. Glutamylation is also involved in cilia motility. In terms of processing, some glutamate residues at the C-terminus are monoglycylated but not polyglycylated due to the absence of functional TTLL10 in human. Monoglycylation is mainly limited to tubulin incorporated into cilia and flagella axonemes, which is required for their stability and maintenance. Flagella glycylation controls sperm motility. Both polyglutamylation and monoglycylation can coexist on the same protein on adjacent residues, and lowering glycylation levels increases polyglutamylation, and reciprocally. Post-translationally, phosphorylated on Ser-172 by CDK1 during the cell cycle, from metaphase to telophase, but not in interphase. This phosphorylation inhibits tubulin incorporation into microtubules. Expression is primarily restricted to central and peripheral nervous system. Greatly increased expression in most cancerous tissues.

The protein resides in the cytoplasm. It is found in the cytoskeleton. Its subcellular location is the cell projection. It localises to the growth cone. The protein localises to the lamellipodium. The protein resides in the filopodium. In terms of biological role, tubulin is the major constituent of microtubules, protein filaments consisting of alpha- and beta-tubulin heterodimers. Microtubules grow by the addition of GTP-tubulin dimers to the microtubule end, where a stabilizing cap forms. Below the cap, alpha-beta tubulin heterodimers are in GDP-bound state, owing to GTPase activity of alpha-tubulin. TUBB3 plays a critical role in proper axon guidance and maintenance. Binding of NTN1/Netrin-1 to its receptor UNC5C might cause dissociation of UNC5C from polymerized TUBB3 in microtubules and thereby lead to increased microtubule dynamics and axon repulsion. Plays a role in dorsal root ganglion axon projection towards the spinal cord. The sequence is that of Tubulin beta-3 chain (TUBB3) from Homo sapiens (Human).